The primary structure comprises 723 residues: BBSome complex assembly protein BBS10 (723 aa).

Belongs to the TCP-1 chaperonin family. As to quaternary structure, component of a complex composed at least of MKKS, BBS10, BBS12, TCP1, CCT2, CCT3, CCT4, CCT5 and CCT8.

It is found in the cell projection. It localises to the cilium. Its function is as follows. Probable molecular chaperone that assists the folding of proteins upon ATP hydrolysis. Plays a role in the assembly of BBSome, a complex involved in ciliogenesis regulating transports vesicles to the cilia. Involved in adipogenic differentiation. This chain is BBSome complex assembly protein BBS10 (BBS10), found in Pongo abelii (Sumatran orangutan).